We begin with the raw amino-acid sequence, 124 residues long: UPF0231 protein Shewmr4_0656 (124 aa).

The protein belongs to the UPF0231 family.

The chain is UPF0231 protein Shewmr4_0656 from Shewanella sp. (strain MR-4).